Here is a 64-residue protein sequence, read N- to C-terminus: Frontoxin IV (64 aa).

Intrachain disulfides connect Cys3/Cys24, Cys6/Cys11, Cys17/Cys41, Cys45/Cys57, and Cys58/Cys63.

Expressed by the venom gland.

The protein localises to the secreted. In terms of biological role, produces peripheral paralysis by blocking neuromuscular transmission at the postsynaptic site. Binds to the muscular nicotinic acetylcholine receptor (nAChR). This Micrurus frontalis (Coral snake) protein is Frontoxin IV.